The following is a 399-amino-acid chain: Arylacetamide deacetylase (399 aa).

Topologically, residues 1–4 (MRKK) are cytoplasmic. A helical; Signal-anchor for type II membrane protein membrane pass occupies residues 5–25 (YFGFLILGVLLAGYIYVPLPD). Residues 26 to 399 (NVEEPWKIML…QYINWLHENL (374 aa)) lie on the Lumenal side of the membrane. The Involved in the stabilization of the negatively charged intermediate by the formation of the oxyanion hole signature appears at 111–113 (HGG). Cysteine 116 and cysteine 340 are oxidised to a cystine. Residue serine 189 is part of the active site. N-linked (GlcNAc...) asparagine glycosylation is present at asparagine 282. Residues aspartate 343 and histidine 373 contribute to the active site.

This sequence belongs to the 'GDXG' lipolytic enzyme family.

The protein localises to the endoplasmic reticulum membrane. It localises to the microsome membrane. It catalyses the reaction a triacylglycerol + H2O = a diacylglycerol + a fatty acid + H(+). Its function is as follows. Displays cellular triglyceride lipase activity in liver, increases the levels of intracellular fatty acids derived from the hydrolysis of newly formed triglyceride stores and plays a role in very low-density lipoprotein assembly. Displays serine esterase activity in liver. Deacetylates a variety of arylacetamide substrates, including xenobiotic compounds and procarcinogens, converting them to the primary arylamide compounds and increasing their toxicity. The protein is Arylacetamide deacetylase (AADAC) of Bos taurus (Bovine).